The sequence spans 421 residues: 2',3'-cyclic-nucleotide 3'-phosphodiesterase (421 aa).

Ser6 and Ser9 each carry phosphoserine. Tyr110 is subject to Phosphotyrosine. Position 170 is a phosphoserine (Ser170). His251 (proton acceptor) is an active-site residue. A substrate-binding site is contributed by Thr253. The active-site Proton donor is the His330. A substrate-binding site is contributed by Thr332. Ser359 bears the Phosphoserine mark. Cysteine methyl ester is present on Cys418. Cys418 is lipidated: S-farnesyl cysteine. A propeptide spans 419-421 (TII) (removed in mature form).

This sequence belongs to the 2H phosphoesterase superfamily. CNPase family. As to quaternary structure, exists as monomers and homodimers.

Its subcellular location is the membrane. The protein resides in the melanosome. It catalyses the reaction a nucleoside 2',3'-cyclic phosphate + H2O = a nucleoside 2'-phosphate + H(+). Functionally, catalyzes the formation of 2'-nucleotide products from 2',3'-cyclic substrates. May participate in RNA metabolism in the myelinating cell, CNP is the third most abundant protein in central nervous system myelin. The sequence is that of 2',3'-cyclic-nucleotide 3'-phosphodiesterase from Pongo abelii (Sumatran orangutan).